A 375-amino-acid chain; its full sequence is Matrix protein (375 aa).

This sequence belongs to the morbillivirus/respirovirus/rubulavirus M protein family.

Its subcellular location is the virion. The M protein has a crucial role in virus assembly and interacts with the RNP complex as well as with the viral membrane. The sequence is that of Matrix protein (M) from Homo sapiens (Human).